The primary structure comprises 462 residues: Cysteine--tRNA ligase (462 aa).

Cys-28 contacts Zn(2+). Positions 30 to 40 (MTVYDYCHLGH) match the 'HIGH' region motif. 3 residues coordinate Zn(2+): Cys-209, His-234, and Glu-238. The 'KMSKS' region motif lies at 266–270 (KMAKS). ATP is bound at residue Lys-269.

The protein belongs to the class-I aminoacyl-tRNA synthetase family. In terms of assembly, monomer. It depends on Zn(2+) as a cofactor.

Its subcellular location is the cytoplasm. It carries out the reaction tRNA(Cys) + L-cysteine + ATP = L-cysteinyl-tRNA(Cys) + AMP + diphosphate. The sequence is that of Cysteine--tRNA ligase from Alkalilimnicola ehrlichii (strain ATCC BAA-1101 / DSM 17681 / MLHE-1).